Reading from the N-terminus, the 124-residue chain is Ribonuclease pancreatic (124 aa).

The segment covering 1–13 has biased composition (basic and acidic residues); that stretch reads KESAAAKFERQHM. The interval 1–24 is disordered; that stretch reads KESAAAKFERQHMDSSTSSASSSN. Substrate is bound by residues lysine 7 and arginine 10. The active-site Proton acceptor is the histidine 12. 4 disulfides stabilise this stretch: cysteine 26–cysteine 84, cysteine 40–cysteine 95, cysteine 58–cysteine 110, and cysteine 65–cysteine 72. Residue asparagine 34 is glycosylated (N-linked (GlcNAc...) asparagine; partial). Substrate contacts are provided by residues 41–45, lysine 66, and arginine 85; that span reads KPVNT. The active-site Proton donor is histidine 119.

Belongs to the pancreatic ribonuclease family. In terms of assembly, monomer. Interacts with and forms tight 1:1 complexes with RNH1. Dimerization of two such complexes may occur. Interaction with RNH1 inhibits this protein. Pancreas.

The protein localises to the secreted. It carries out the reaction an [RNA] containing cytidine + H2O = an [RNA]-3'-cytidine-3'-phosphate + a 5'-hydroxy-ribonucleotide-3'-[RNA].. The catalysed reaction is an [RNA] containing uridine + H2O = an [RNA]-3'-uridine-3'-phosphate + a 5'-hydroxy-ribonucleotide-3'-[RNA].. Functionally, endonuclease that catalyzes the cleavage of RNA on the 3' side of pyrimidine nucleotides. Acts on single-stranded and double-stranded RNA. The chain is Ribonuclease pancreatic (RNASE1) from Ovis aries (Sheep).